The following is a 166-amino-acid chain: Regulatory protein RecX (166 aa).

This sequence belongs to the RecX family.

The protein localises to the cytoplasm. Functionally, modulates RecA activity. This is Regulatory protein RecX from Escherichia fergusonii (strain ATCC 35469 / DSM 13698 / CCUG 18766 / IAM 14443 / JCM 21226 / LMG 7866 / NBRC 102419 / NCTC 12128 / CDC 0568-73).